Consider the following 275-residue polypeptide: Large ribosomal subunit protein uL2 (275 aa).

The segment at 222–275 (GVAMNPVDHPHGGGEGRNKGRHPTSPWGQKSKGLKTRNNKRTDSMIIRRRAKKK) is disordered. The segment covering 229 to 239 (DHPHGGGEGRN) has biased composition (basic and acidic residues).

The protein belongs to the universal ribosomal protein uL2 family. Part of the 50S ribosomal subunit. Forms a bridge to the 30S subunit in the 70S ribosome.

One of the primary rRNA binding proteins. Required for association of the 30S and 50S subunits to form the 70S ribosome, for tRNA binding and peptide bond formation. It has been suggested to have peptidyltransferase activity; this is somewhat controversial. Makes several contacts with the 16S rRNA in the 70S ribosome. The polypeptide is Large ribosomal subunit protein uL2 (Psychrobacter arcticus (strain DSM 17307 / VKM B-2377 / 273-4)).